Consider the following 297-residue polypeptide: 4-hydroxy-tetrahydrodipicolinate synthase (297 aa).

T45 is a binding site for pyruvate. Y133 serves as the catalytic Proton donor/acceptor. K161 acts as the Schiff-base intermediate with substrate in catalysis. I205 serves as a coordination point for pyruvate.

This sequence belongs to the DapA family. As to quaternary structure, homotetramer; dimer of dimers.

It localises to the cytoplasm. It carries out the reaction L-aspartate 4-semialdehyde + pyruvate = (2S,4S)-4-hydroxy-2,3,4,5-tetrahydrodipicolinate + H2O + H(+). The protein operates within amino-acid biosynthesis; L-lysine biosynthesis via DAP pathway; (S)-tetrahydrodipicolinate from L-aspartate: step 3/4. Functionally, catalyzes the condensation of (S)-aspartate-beta-semialdehyde [(S)-ASA] and pyruvate to 4-hydroxy-tetrahydrodipicolinate (HTPA). In Dichelobacter nodosus (strain VCS1703A), this protein is 4-hydroxy-tetrahydrodipicolinate synthase.